The chain runs to 237 residues: Photosystem I-associated linker protein CpcL (237 aa).

Positions 11–191 (TTQNQRVQSF…DYRDRAGIVR (181 aa)) constitute a PBS-linker domain. The chain crosses the membrane as a helical span at residues 208–228 (GVAILGVLLAISAGMTFLFVL).

This sequence belongs to the phycobilisome linker protein family. As to quaternary structure, part of a specialized phycobilisome (PBS), a structure that is usually composed of two distinct substructures: a core complex and a number of rods radiating from the core. This protein is part of a core-less PBS rod (called CpcL-PBS). In vegetative cells associated substoichiometrically with photosystem I and phycobiliproteins phycocyanin as well as phycoerythrocyanin in the thylakoid membrane, not found in conventional, hemidiscoidal phycobilisomes.

Its subcellular location is the cellular thylakoid membrane. Rod linker protein, associated with phycocyanin (PC). Linker polypeptides determine the state of aggregation and the location of the disk-shaped phycobiliprotein units within the phycobilisome (PBS) and modulate their spectroscopic properties in order to mediate a directed and optimal energy transfer. Forms a supercomplex with tetrameric photosystem I (PSI) and PC that allows efficient energy transfer from PC to PSI. This protein seems to be in the middle of the PC hexameric rod and may anchor the PC rods at the periphery of PSI tetramers. May be involved in the cyclic electron transport around PSI that provides ATP needed for N(2) fixation in heterocysts. In Nostoc sp. (strain PCC 7120 / SAG 25.82 / UTEX 2576), this protein is Photosystem I-associated linker protein CpcL.